A 325-amino-acid polypeptide reads, in one-letter code: 4-hydroxy-3-methylbut-2-enyl diphosphate reductase (325 aa).

Cysteine 13 contributes to the [4Fe-4S] cluster binding site. Histidine 42 and histidine 76 together coordinate (2E)-4-hydroxy-3-methylbut-2-enyl diphosphate. Histidine 42 and histidine 76 together coordinate dimethylallyl diphosphate. 2 residues coordinate isopentenyl diphosphate: histidine 42 and histidine 76. Residue cysteine 98 participates in [4Fe-4S] cluster binding. Residue histidine 126 participates in (2E)-4-hydroxy-3-methylbut-2-enyl diphosphate binding. Histidine 126 contributes to the dimethylallyl diphosphate binding site. Histidine 126 is an isopentenyl diphosphate binding site. Residue glutamate 128 is the Proton donor of the active site. Threonine 169 provides a ligand contact to (2E)-4-hydroxy-3-methylbut-2-enyl diphosphate. Cysteine 230 contacts [4Fe-4S] cluster. Residues serine 258, serine 259, asparagine 260, and serine 306 each contribute to the (2E)-4-hydroxy-3-methylbut-2-enyl diphosphate site. Dimethylallyl diphosphate is bound by residues serine 258, serine 259, asparagine 260, and serine 306. Positions 258, 259, 260, and 306 each coordinate isopentenyl diphosphate.

The protein belongs to the IspH family. It depends on [4Fe-4S] cluster as a cofactor.

The catalysed reaction is isopentenyl diphosphate + 2 oxidized [2Fe-2S]-[ferredoxin] + H2O = (2E)-4-hydroxy-3-methylbut-2-enyl diphosphate + 2 reduced [2Fe-2S]-[ferredoxin] + 2 H(+). It carries out the reaction dimethylallyl diphosphate + 2 oxidized [2Fe-2S]-[ferredoxin] + H2O = (2E)-4-hydroxy-3-methylbut-2-enyl diphosphate + 2 reduced [2Fe-2S]-[ferredoxin] + 2 H(+). It participates in isoprenoid biosynthesis; dimethylallyl diphosphate biosynthesis; dimethylallyl diphosphate from (2E)-4-hydroxy-3-methylbutenyl diphosphate: step 1/1. Its pathway is isoprenoid biosynthesis; isopentenyl diphosphate biosynthesis via DXP pathway; isopentenyl diphosphate from 1-deoxy-D-xylulose 5-phosphate: step 6/6. Its function is as follows. Catalyzes the conversion of 1-hydroxy-2-methyl-2-(E)-butenyl 4-diphosphate (HMBPP) into a mixture of isopentenyl diphosphate (IPP) and dimethylallyl diphosphate (DMAPP). Acts in the terminal step of the DOXP/MEP pathway for isoprenoid precursor biosynthesis. This Prosthecochloris aestuarii (strain DSM 271 / SK 413) protein is 4-hydroxy-3-methylbut-2-enyl diphosphate reductase.